The chain runs to 424 residues: Testican-2 (424 aa).

Positions 1 to 22 (MRAPGCGRLVLPLLLLAAAALA) are cleaved as a signal peptide. Serine 72 carries the phosphoserine; by FAM20C modification. 5 cysteine pairs are disulfide-bonded: cysteine 90–cysteine 101, cysteine 95–cysteine 111, cysteine 136–cysteine 166, cysteine 139–cysteine 159, and cysteine 148–cysteine 180. The 53-residue stretch at 130 to 182 (GNKDSICKPCHMAQLASVCGSDGHTYSSVCKLEQQACLSSKQLAVRCEGPCPC) folds into the Kazal-like domain. Residue asparagine 225 is glycosylated (N-linked (GlcNAc...) asparagine). The Thyroglobulin type-1 domain occupies 310-376 (KPPCLAELER…GTRTHGSPDC (67 aa)). Disulfide bonds link cysteine 313-cysteine 337, cysteine 348-cysteine 355, and cysteine 357-cysteine 376. O-linked (Xyl...) (glycosaminoglycan) serine glycans are attached at residues serine 383 and serine 388. A disordered region spans residues 387-424 (GSGVGWEDEEEKETEEAGEEAEEEEGEAGEADDGGYIW). The segment covering 392–424 (WEDEEEKETEEAGEEAEEEEGEAGEADDGGYIW) has biased composition (acidic residues).

In terms of processing, contains chondroitin sulfate and heparan sulfate O-linked oligosaccharides. Highly expressed in brain. Also found in lung and testis.

Its subcellular location is the secreted. The protein resides in the extracellular space. It is found in the extracellular matrix. In terms of biological role, may participate in diverse steps of neurogenesis. Binds calcium. The polypeptide is Testican-2 (SPOCK2) (Homo sapiens (Human)).